Consider the following 303-residue polypeptide: Movement protein (303 aa).

A compositionally biased stretch (polar residues) spans 1 to 18 (MSNIVSPFSGSSRTTSDV). Disordered regions lie at residues 1–24 (MSNI…QAGG) and 267–303 (EESE…LRIK).

It belongs to the bromovirus movement protein family. In terms of processing, phosphorylated by host.

It is found in the host cell junction. Its subcellular location is the host plasmodesma. Its function is as follows. Transports viral genome to neighboring plant cells directly through plasmosdesmata, without any budding. The movement protein allows efficient cell to cell propagation, by bypassing the host cell wall barrier. Acts by forming a tubular structure at the host plasmodesmata, enlarging it enough to allow free passage of virion capsids. This is Movement protein from Brome mosaic virus (BMV).